The sequence spans 196 residues: Small ribosomal subunit protein uS4c (196 aa).

A disordered region spans residues 16-36 (GALPGLTRKTPKSGSNLKKKF). The S4 RNA-binding domain maps to 89-169 (MRLDNILFRL…LPKHLTIDTL (81 aa)).

This sequence belongs to the universal ribosomal protein uS4 family. In terms of assembly, part of the 30S ribosomal subunit. Contacts protein S5. The interaction surface between S4 and S5 is involved in control of translational fidelity.

Its subcellular location is the plastid. The protein localises to the chloroplast. Its function is as follows. One of the primary rRNA binding proteins, it binds directly to 16S rRNA where it nucleates assembly of the body of the 30S subunit. With S5 and S12 plays an important role in translational accuracy. This chain is Small ribosomal subunit protein uS4c (rps4), found in Cinna latifolia (Drooping woodreed).